The following is a 304-amino-acid chain: GTPase Era (304 aa).

Residues 11–179 form the Era-type G domain; sequence YCGFIAIVGR…QKIVRKSLRE (169 aa). Residues 19–26 are G1; sequence GRPNVGKS. 19 to 26 provides a ligand contact to GTP; it reads GRPNVGKS. Residues 45 to 49 are G2; sequence QTTRH. The interval 66 to 69 is G3; it reads DTPG. GTP-binding positions include 66–70 and 128–131; these read DTPGL and NKVD. The interval 128-131 is G4; that stretch reads NKVD. A G5 region spans residues 158–160; it reads ISA. Positions 210 to 287 constitute a KH type-2 domain; sequence TGEELPYSVT…HLELWVKVKA (78 aa).

It belongs to the TRAFAC class TrmE-Era-EngA-EngB-Septin-like GTPase superfamily. Era GTPase family. In terms of assembly, monomer.

Its subcellular location is the cytoplasm. It localises to the cell inner membrane. In terms of biological role, an essential GTPase that binds both GDP and GTP, with rapid nucleotide exchange. Plays a role in 16S rRNA processing and 30S ribosomal subunit biogenesis and possibly also in cell cycle regulation and energy metabolism. In Haemophilus ducreyi (strain 35000HP / ATCC 700724), this protein is GTPase Era.